Here is a 723-residue protein sequence, read N- to C-terminus: Polyribonucleotide nucleotidyltransferase (723 aa).

Residues aspartate 488 and aspartate 494 each contribute to the Mg(2+) site. Residues 555 to 614 enclose the KH domain; it reads PRMITMKIHPDKIREVIGKGGSTIQALTKETGTTIDIQEDGTITIASTSTDGMAEAKRRI. Positions 624–692 constitute an S1 motif domain; sequence GKIYAGTVLK…EKGRLRLSLK (69 aa). The disordered stretch occupies residues 701 to 723; sequence SISPINAGEAAAPAAPAEGSEQQ. Over residues 707–723 the composition is skewed to low complexity; that stretch reads AGEAAAPAAPAEGSEQQ.

This sequence belongs to the polyribonucleotide nucleotidyltransferase family. Mg(2+) serves as cofactor.

The protein resides in the cytoplasm. It carries out the reaction RNA(n+1) + phosphate = RNA(n) + a ribonucleoside 5'-diphosphate. Functionally, involved in mRNA degradation. Catalyzes the phosphorolysis of single-stranded polyribonucleotides processively in the 3'- to 5'-direction. The polypeptide is Polyribonucleotide nucleotidyltransferase (Cupriavidus necator (strain ATCC 17699 / DSM 428 / KCTC 22496 / NCIMB 10442 / H16 / Stanier 337) (Ralstonia eutropha)).